Consider the following 1116-residue polypeptide: DUB-associated factor 1 (1116 aa).

WD repeat units lie at residues 21–62, 91–132, 160–200, 219–262, 266–305, 387–426, and 428–466; these read AHIL…NEPE, KNSD…DHDD, VHDG…EKMA, SMSP…EVIR, AHRTNIKVVRTLDDSTRLISTSSDGVINVWDLNCRHDQTT, KKYGGILDIALLPNEKLLFSFCTDSNLNVLDLTNNHFSVN, and GGFALTRSSLLTNRRHVITENTKGQMQRWDIVSCELLNT. Residues 578–600 form a disordered region; that stretch reads LDTGYNSESKKNNKDKKRKSTFK. Ser668 is modified (phosphoserine). Thr693 carries the phosphothreonine modification. The span at 747–776 shows a compositional bias: polar residues; it reads ISSQDLPSNNTHNKLRSSENSRANSTSTLE. 2 disordered regions span residues 747-784 and 963-994; these read ISSQDLPSNNTHNKLRSSENSRANSTSTLEGNEKKKPE and FISASDTTESSGNDSSDSSLGNGNEAVSPSTQ. A compositionally biased stretch (low complexity) spans 967–987; that stretch reads SDTTESSGNDSSDSSLGNGNE.

Interacts (via its WD repeats) with ubiquitin.

It is found in the cytoplasm. Ubiquitin-binding protein involved in the resistance to phenanthroline, sanguinarine, nordihydroguaiaretic acid (NDGA), isopropyl (N-3-chloro-phenyl)-carbamate (IPCPC) and guanosine 5'-O-(2-thiodiphosphate). This chain is DUB-associated factor 1, found in Saccharomyces cerevisiae (strain ATCC 204508 / S288c) (Baker's yeast).